A 121-amino-acid polypeptide reads, in one-letter code: uncharacterized protein (121 aa).

The disordered stretch occupies residues 1–121; the sequence is MGQVLSICSS…QQEREQIKWD (121 aa). A lipid anchor (N-myristoyl glycine) is attached at glycine 2. Cysteine 8 carries S-palmitoyl cysteine lipidation. Basic and acidic residues-rich tracts occupy residues 11–23, 73–83, 90–105, and 112–121; these read KSKE…EKPT, AAEKRNIEKKK, RQLE…EHLQ, and QQEREQIKWD.

To yeast YGL108C. Post-translationally, myristoylated. The N-myristoylated protein is further palmitoylated.

It localises to the cytoplasm. It is found in the cytosol. This is an uncharacterized protein from Schizosaccharomyces pombe (strain 972 / ATCC 24843) (Fission yeast).